A 367-amino-acid chain; its full sequence is Serine/threonine-protein phosphatase 2A activator 2 (367 aa).

The protein belongs to the PTPA-type PPIase family.

The protein resides in the cytoplasm. The catalysed reaction is [protein]-peptidylproline (omega=180) = [protein]-peptidylproline (omega=0). PPIases accelerate the folding of proteins. It catalyzes the cis-trans isomerization of proline imidic peptide bonds in oligopeptides. Acts as a regulatory subunit for PP2A-like phosphatases modulating their activity or substrate specificity, probably by inducing a conformational change in the catalytic subunit, a direct target of the PPIase. Can reactivate inactive phosphatase PP2A-phosphatase methylesterase complexes (PP2Ai) in presence of ATP and Mg(2+) by dissociating the inactive form from the complex. This Debaryomyces hansenii (strain ATCC 36239 / CBS 767 / BCRC 21394 / JCM 1990 / NBRC 0083 / IGC 2968) (Yeast) protein is Serine/threonine-protein phosphatase 2A activator 2 (RRD2).